Reading from the N-terminus, the 487-residue chain is Serine/threonine-protein kinase 4 (487 aa).

Residue methionine 1 is modified to N-acetylmethionine. Threonine 3 is subject to Phosphothreonine. A Protein kinase domain is found at 30–281 (FDVLEKLGEG…ATQLLQHPFV (252 aa)). Residues 36–44 (LGEGSYGSV) and lysine 59 each bind ATP. Aspartate 149 serves as the catalytic Proton acceptor. Threonine 183 is subject to Phosphothreonine; by autocatalysis. Phosphoserine is present on serine 265. Positions 290–310 (LRDLINEAMDVKLKRQEAQQR) form a coiled coil. A disordered region spans residues 305 to 338 (QEAQQREVDQDDEENSEEDELDSGTMVRAVGDDM). Over residues 313–326 (DQDDEENSEEDELD) the composition is skewed to acidic residues. Phosphoserine is present on serine 320. 2 positions are modified to phosphothreonine: threonine 340 and threonine 367. Threonine 387 bears the Phosphothreonine; by PKB/AKT1 mark. A phosphoserine mark is found at serine 410 and serine 414. A Phosphotyrosine modification is found at tyrosine 433. The SARAH domain maps to 433–480 (YEFLKSWTVEDLQKRLLALDPMMEQEIEEIRQKYQSKRQPILDAIEAK).

Belongs to the protein kinase superfamily. STE Ser/Thr protein kinase family. STE20 subfamily. Homodimer; mediated via the coiled-coil region. Interacts with NORE1, which inhibits autoactivation. Interacts with and stabilizes SAV1. Interacts with RASSF1. Interacts with FOXO3. Interacts with RASSF2 (via SARAH domain). Interacts with AR, PKB/AKT1, TNNI3 and SIRT1. Interacts with DLG5 (via PDZ domain 3). Interacts with MARK3 and SCRIB in the presence of DLG5. It depends on Mg(2+) as a cofactor. Autophosphorylated on serine and threonine residues. Phosphorylation at Thr-387 by PKB/AKT1, leads to inhibition of its: kinase activity, nuclear translocation and autophosphorylation at Thr-183. It also diminishes its cleavage by caspases and its ability to phosphorylate FOXO3. In terms of processing, proteolytically cleaved by caspase-3 during apoptosis at Asp-326 and Asp-349 resulting in a 37 kDa or a 39 kDa subunit respectively. The 39 kDa subunit is further cleaved into the 37 kDa form. Proteolytic cleavage results in kinase activation and nuclear translocation of the truncated form (MST1/N). It is less likely that cleavage at Asp-349 is a prerequisite for activation as this site is not conserved in the murine ortholog.

Its subcellular location is the cytoplasm. The protein localises to the nucleus. It carries out the reaction L-seryl-[protein] + ATP = O-phospho-L-seryl-[protein] + ADP + H(+). The enzyme catalyses L-threonyl-[protein] + ATP = O-phospho-L-threonyl-[protein] + ADP + H(+). Its activity is regulated as follows. Inhibited by the C-terminal non-catalytic region. Activated by caspase-cleavage. Full activation also requires homodimerization and autophosphorylation of Thr-183. Activated by RASSF1 which acts by preventing its dephosphorylation. Stress-activated, pro-apoptotic kinase which, following caspase-cleavage, enters the nucleus and induces chromatin condensation followed by internucleosomal DNA fragmentation. Key component of the Hippo signaling pathway which plays a pivotal role in organ size control and tumor suppression by restricting proliferation and promoting apoptosis. The core of this pathway is composed of a kinase cascade wherein STK3/MST2 and STK4/MST1, in complex with its regulatory protein SAV1, phosphorylates and activates LATS1/2 in complex with its regulatory protein MOB1, which in turn phosphorylates and inactivates YAP1 oncoprotein and WWTR1/TAZ. Phosphorylation of YAP1 by LATS2 inhibits its translocation into the nucleus to regulate cellular genes important for cell proliferation, cell death, and cell migration. STK3/MST2 and STK4/MST1 are required to repress proliferation of mature hepatocytes, to prevent activation of facultative adult liver stem cells (oval cells), and to inhibit tumor formation. Phosphorylates 'Ser-14' of histone H2B (H2BS14ph) during apoptosis. Phosphorylates FOXO3 upon oxidative stress, which results in its nuclear translocation and cell death initiation. Phosphorylates MOBKL1A, MOBKL1B and RASSF2. Phosphorylates TNNI3 (cardiac Tn-I) and alters its binding affinity to TNNC1 (cardiac Tn-C) and TNNT2 (cardiac Tn-T). Phosphorylates FOXO1 on 'Ser-212' and regulates its activation and stimulates transcription of PMAIP1 in a FOXO1-dependent manner. Phosphorylates SIRT1 and inhibits SIRT1-mediated p53/TP53 deacetylation, thereby promoting p53/TP53 dependent transcription and apoptosis upon DNA damage. Acts as an inhibitor of PKB/AKT1. Phosphorylates AR on 'Ser-650' and suppresses its activity by intersecting with PKB/AKT1 signaling and antagonizing formation of AR-chromatin complexes. The polypeptide is Serine/threonine-protein kinase 4 (STK4) (Lemur catta (Ring-tailed lemur)).